Here is a 179-residue protein sequence, read N- to C-terminus: Ribosome maturation factor RimM (179 aa).

In terms of domain architecture, PRC barrel spans 96–175 (KDEYFWFDIE…IITVIGAMDI (80 aa)).

The protein belongs to the RimM family. As to quaternary structure, binds ribosomal protein uS19.

The protein resides in the cytoplasm. An accessory protein needed during the final step in the assembly of 30S ribosomal subunit, possibly for assembly of the head region. Essential for efficient processing of 16S rRNA. May be needed both before and after RbfA during the maturation of 16S rRNA. It has affinity for free ribosomal 30S subunits but not for 70S ribosomes. This is Ribosome maturation factor RimM from Sulfurimonas denitrificans (strain ATCC 33889 / DSM 1251) (Thiomicrospira denitrificans (strain ATCC 33889 / DSM 1251)).